Here is a 134-residue protein sequence, read N- to C-terminus: D-ribose pyranase (134 aa).

The Proton donor role is filled by His20. Substrate-binding positions include Asp28, His101, and 123-125 (YSN).

Belongs to the RbsD / FucU family. RbsD subfamily. As to quaternary structure, homodecamer.

The protein localises to the cytoplasm. The enzyme catalyses beta-D-ribopyranose = beta-D-ribofuranose. The protein operates within carbohydrate metabolism; D-ribose degradation; D-ribose 5-phosphate from beta-D-ribopyranose: step 1/2. Functionally, catalyzes the interconversion of beta-pyran and beta-furan forms of D-ribose. The polypeptide is D-ribose pyranase (Pseudomonas entomophila (strain L48)).